Reading from the N-terminus, the 78-residue chain is MSRVCKVTGKKPMAGNNVSHAHNKTRRRFLPNLQYHRFWVESENRWVRMRVSTKGIRTIDKKGIDVVLADLRAAGEKI.

The protein belongs to the bacterial ribosomal protein bL28 family.

The protein is Large ribosomal subunit protein bL28 of Acidithiobacillus ferrooxidans (strain ATCC 23270 / DSM 14882 / CIP 104768 / NCIMB 8455) (Ferrobacillus ferrooxidans (strain ATCC 23270)).